The following is a 465-amino-acid chain: SHC-transforming protein 1 (465 aa).

Residues 44–227 (MGPGVPYLVR…AGFDGSAWDE (184 aa)) enclose the PID domain. Residues 228–369 (EEEELPDHAY…SMEDQLKREP (142 aa)) form a CH1 region. A disordered region spans residues 281-315 (VSGAEQDSRKMQPTLQGRERFPVPCSRPPNRPDLF). The 92-residue stretch at 370 to 461 (WYQGKMSRKE…GSELCLQQPV (92 aa)) folds into the SH2 domain.

As to quaternary structure, interacts with grb2. Highly expressed in oocytes and embryo. Also expressed in liver. Detected in ovary, testis and heart and to a lesser extent in liver (at protein level).

The protein localises to the cytoplasm. In terms of biological role, implicated in ras-dependent oocyte maturation induced by insulin/IGF1. This chain is SHC-transforming protein 1 (shc1), found in Xenopus laevis (African clawed frog).